Here is a 178-residue protein sequence, read N- to C-terminus: CASP-like protein 2U3 (178 aa).

At 1–4 (MACR) the chain is on the cytoplasmic side. Residues 5–25 (VMEVLLRVLAILLSIAGALVM) traverse the membrane as a helical segment. Topologically, residues 26–52 (AKDKQDTFVMLGTVPVPLYARHSYVEA) are extracellular. The helical transmembrane segment at 53–73 (FVFLVYANGIVAIYCFIAVLL) threads the bilayer. Residues 74 to 80 (SLLAKSR) lie on the Cytoplasmic side of the membrane. Residues 81 to 101 (VLAGLLFFMDQALAYLLLAAA) traverse the membrane as a helical segment. Topologically, residues 102–132 (AASTEVAYIAKRGEKKLVWGEVCSNFEHFCN) are extracellular. Residues 133-153 (LVGVSLVLTFLSVLVLVTLAI) traverse the membrane as a helical segment. Residues 154–178 (LSGKRLFGHPPLCAPPSTPPVHQGV) lie on the Cytoplasmic side of the membrane.

This sequence belongs to the Casparian strip membrane proteins (CASP) family. As to quaternary structure, homodimer and heterodimers.

Its subcellular location is the cell membrane. The polypeptide is CASP-like protein 2U3 (Pteridium aquilinum subsp. aquilinum (Bracken fern)).